We begin with the raw amino-acid sequence, 239 residues long: Uridylate kinase (239 aa).

ATP is bound at residue 10–13 (KLSG). The involved in allosteric activation by GTP stretch occupies residues 18–23 (GEQGYG). Glycine 52 serves as a coordination point for UMP. Positions 53 and 57 each coordinate ATP. Residues aspartate 72 and 133–140 (TGNPYFST) each bind UMP. ATP contacts are provided by asparagine 161, tyrosine 167, and glutamate 170.

This sequence belongs to the UMP kinase family. Homohexamer.

The protein localises to the cytoplasm. It catalyses the reaction UMP + ATP = UDP + ADP. It functions in the pathway pyrimidine metabolism; CTP biosynthesis via de novo pathway; UDP from UMP (UMPK route): step 1/1. With respect to regulation, allosterically activated by GTP. Inhibited by UTP. Functionally, catalyzes the reversible phosphorylation of UMP to UDP. The chain is Uridylate kinase from Halalkalibacterium halodurans (strain ATCC BAA-125 / DSM 18197 / FERM 7344 / JCM 9153 / C-125) (Bacillus halodurans).